The primary structure comprises 546 residues: Chaperonin GroEL (546 aa).

Residues 30-33 (TLGP), Lys-51, 87-91 (DGTTT), Gly-415, 479-481 (NAA), and Asp-495 each bind ATP. A disordered region spans residues 526–546 (KKDEPAMPAGGGMGGMGGMDF). The segment covering 534–546 (AGGGMGGMGGMDF) has biased composition (gly residues).

This sequence belongs to the chaperonin (HSP60) family. As to quaternary structure, forms a cylinder of 14 subunits composed of two heptameric rings stacked back-to-back. Interacts with the co-chaperonin GroES.

The protein resides in the cytoplasm. The catalysed reaction is ATP + H2O + a folded polypeptide = ADP + phosphate + an unfolded polypeptide.. Its function is as follows. Together with its co-chaperonin GroES, plays an essential role in assisting protein folding. The GroEL-GroES system forms a nano-cage that allows encapsulation of the non-native substrate proteins and provides a physical environment optimized to promote and accelerate protein folding. In Xanthomonas oryzae pv. oryzae (strain MAFF 311018), this protein is Chaperonin GroEL.